The sequence spans 335 residues: Phosphate acyltransferase (335 aa).

Belongs to the PlsX family. In terms of assembly, homodimer. Probably interacts with PlsY.

It localises to the cytoplasm. It catalyses the reaction a fatty acyl-[ACP] + phosphate = an acyl phosphate + holo-[ACP]. It functions in the pathway lipid metabolism; phospholipid metabolism. Catalyzes the reversible formation of acyl-phosphate (acyl-PO(4)) from acyl-[acyl-carrier-protein] (acyl-ACP). This enzyme utilizes acyl-ACP as fatty acyl donor, but not acyl-CoA. This is Phosphate acyltransferase from Clostridium botulinum (strain Langeland / NCTC 10281 / Type F).